A 334-amino-acid chain; its full sequence is Holliday junction branch migration complex subunit RuvB (334 aa).

Residues 4-186 (ADRLIAPISN…FGIVQRLEYY (183 aa)) form a large ATPase domain (RuvB-L) region. ATP-binding positions include Ile25, Arg26, Gly67, Lys70, Thr71, Thr72, 133-135 (EDY), Arg176, Tyr186, and Arg223. A Mg(2+)-binding site is contributed by Thr71. The segment at 187 to 257 (KVADLQHIVQ…TADRALNMLD (71 aa)) is small ATPAse domain (RuvB-S). The tract at residues 260 to 334 (HQGFDYMDRK…RAYLHFGIEK (75 aa)) is head domain (RuvB-H). DNA contacts are provided by Arg315 and Arg320.

This sequence belongs to the RuvB family. Homohexamer. Forms an RuvA(8)-RuvB(12)-Holliday junction (HJ) complex. HJ DNA is sandwiched between 2 RuvA tetramers; dsDNA enters through RuvA and exits via RuvB. An RuvB hexamer assembles on each DNA strand where it exits the tetramer. Each RuvB hexamer is contacted by two RuvA subunits (via domain III) on 2 adjacent RuvB subunits; this complex drives branch migration. In the full resolvosome a probable DNA-RuvA(4)-RuvB(12)-RuvC(2) complex forms which resolves the HJ.

It is found in the cytoplasm. The catalysed reaction is ATP + H2O = ADP + phosphate + H(+). The RuvA-RuvB-RuvC complex processes Holliday junction (HJ) DNA during genetic recombination and DNA repair, while the RuvA-RuvB complex plays an important role in the rescue of blocked DNA replication forks via replication fork reversal (RFR). RuvA specifically binds to HJ cruciform DNA, conferring on it an open structure. The RuvB hexamer acts as an ATP-dependent pump, pulling dsDNA into and through the RuvAB complex. RuvB forms 2 homohexamers on either side of HJ DNA bound by 1 or 2 RuvA tetramers; 4 subunits per hexamer contact DNA at a time. Coordinated motions by a converter formed by DNA-disengaged RuvB subunits stimulates ATP hydrolysis and nucleotide exchange. Immobilization of the converter enables RuvB to convert the ATP-contained energy into a lever motion, pulling 2 nucleotides of DNA out of the RuvA tetramer per ATP hydrolyzed, thus driving DNA branch migration. The RuvB motors rotate together with the DNA substrate, which together with the progressing nucleotide cycle form the mechanistic basis for DNA recombination by continuous HJ branch migration. Branch migration allows RuvC to scan DNA until it finds its consensus sequence, where it cleaves and resolves cruciform DNA. The sequence is that of Holliday junction branch migration complex subunit RuvB from Vibrio cholerae serotype O1 (strain ATCC 39541 / Classical Ogawa 395 / O395).